We begin with the raw amino-acid sequence, 242 residues long: Uridylate kinase (242 aa).

Lys-15 to Gly-18 is a binding site for ATP. Residues Gly-23–Gly-28 are involved in allosteric activation by GTP. A UMP-binding site is contributed by Gly-57. ATP-binding residues include Gly-58 and Arg-62. Residues Asp-77 and Thr-138–Thr-145 contribute to the UMP site. ATP contacts are provided by Thr-165, Tyr-171, and Asp-174.

Belongs to the UMP kinase family. As to quaternary structure, homohexamer.

It is found in the cytoplasm. The enzyme catalyses UMP + ATP = UDP + ADP. It participates in pyrimidine metabolism; CTP biosynthesis via de novo pathway; UDP from UMP (UMPK route): step 1/1. Its activity is regulated as follows. Allosterically activated by GTP. Inhibited by UTP. In terms of biological role, catalyzes the reversible phosphorylation of UMP to UDP. The sequence is that of Uridylate kinase from Shewanella sp. (strain ANA-3).